The chain runs to 185 residues: Large ribosomal subunit protein uL5 (185 aa).

This sequence belongs to the universal ribosomal protein uL5 family. As to quaternary structure, part of the 50S ribosomal subunit; part of the 5S rRNA/L5/L18/L25 subcomplex. Contacts the 5S rRNA and the P site tRNA. Forms a bridge to the 30S subunit in the 70S ribosome.

Its function is as follows. This is one of the proteins that bind and probably mediate the attachment of the 5S RNA into the large ribosomal subunit, where it forms part of the central protuberance. In the 70S ribosome it contacts protein S13 of the 30S subunit (bridge B1b), connecting the 2 subunits; this bridge is implicated in subunit movement. Contacts the P site tRNA; the 5S rRNA and some of its associated proteins might help stabilize positioning of ribosome-bound tRNAs. This chain is Large ribosomal subunit protein uL5, found in Bartonella tribocorum (strain CIP 105476 / IBS 506).